The sequence spans 511 residues: Pentatricopeptide repeat-containing protein At5g08510 (511 aa).

PPR repeat units lie at residues 46–80 (CTFLYNKLIQAYYVHHQPHESIVLYNLLSFDGLRP), 81–115 (SHHTFNFIFAASASFSSARPLRLLHSQFFRSGFES), 116–146 (DSFCCTTLITAYAKLGALCCARRVFDEMSKR), 147–181 (DVPVWNAMITGYQRRGDMKAAMELFDSMPRKNVTS), 182–213 (WTTVISGFSQNGNYSEALKMFLCMEKDKSVKP), 214–248 (NHITVVSVLPACANLGELEIGRRLEGYARENGFFD), 249–279 (NIYVCNATIEMYSKCGMIDVAKRLFEELGNQ), 281–315 (NLCSWNSMIGSLATHGKHDEALTLFAQMLREGEKP), 316–346 (DAVTFVGLLLACVHGGMVVKGQELFKSMEEV), and 352–382 (KLEHYGCMIDLLGRVGKLQEAYDLIKTMPMK). The segment at 387-462 (VWGTLLGACS…AAGYSYFVEV (76 aa)) is type E motif. The tract at residues 463 to 494 (GVDVHKFTVEDKSHPRSYEIYQVLEEIFRRMK) is type E(+) motif.

Belongs to the PPR family. PCMP-E subfamily.

The sequence is that of Pentatricopeptide repeat-containing protein At5g08510 (PCMP-E20) from Arabidopsis thaliana (Mouse-ear cress).